A 388-amino-acid chain; its full sequence is Mannitol-1-phosphate 5-dehydrogenase (388 aa).

4–15 (AVHFGAGNIGRG) is a binding site for NAD(+).

This sequence belongs to the mannitol dehydrogenase family.

It catalyses the reaction D-mannitol 1-phosphate + NAD(+) = beta-D-fructose 6-phosphate + NADH + H(+). This chain is Mannitol-1-phosphate 5-dehydrogenase, found in Thermoanaerobacter pseudethanolicus (strain ATCC 33223 / 39E) (Clostridium thermohydrosulfuricum).